A 491-amino-acid polypeptide reads, in one-letter code: Probable glycogen synthase 2 (491 aa).

Residue K15 participates in ADP-alpha-D-glucose binding.

This sequence belongs to the glycosyltransferase 1 family. Bacterial/plant glycogen synthase subfamily.

The enzyme catalyses [(1-&gt;4)-alpha-D-glucosyl](n) + ADP-alpha-D-glucose = [(1-&gt;4)-alpha-D-glucosyl](n+1) + ADP + H(+). It participates in glycan biosynthesis; glycogen biosynthesis. Its function is as follows. Synthesizes alpha-1,4-glucan chains using ADP-glucose. This is Probable glycogen synthase 2 (glgA2) from Synechocystis sp. (strain ATCC 27184 / PCC 6803 / Kazusa).